The sequence spans 121 residues: Large ribosomal subunit protein uL18 (121 aa).

The protein belongs to the universal ribosomal protein uL18 family. As to quaternary structure, part of the 50S ribosomal subunit; part of the 5S rRNA/L5/L18/L25 subcomplex. Contacts the 5S and 23S rRNAs.

This is one of the proteins that bind and probably mediate the attachment of the 5S RNA into the large ribosomal subunit, where it forms part of the central protuberance. The protein is Large ribosomal subunit protein uL18 of Mesomycoplasma hyopneumoniae (strain 232) (Mycoplasma hyopneumoniae).